A 194-amino-acid polypeptide reads, in one-letter code: ATP-dependent Clp protease proteolytic subunit (194 aa).

Ser98 (nucleophile) is an active-site residue. The active site involves His123.

The protein belongs to the peptidase S14 family. In terms of assembly, fourteen ClpP subunits assemble into 2 heptameric rings which stack back to back to give a disk-like structure with a central cavity, resembling the structure of eukaryotic proteasomes.

Its subcellular location is the cytoplasm. It catalyses the reaction Hydrolysis of proteins to small peptides in the presence of ATP and magnesium. alpha-casein is the usual test substrate. In the absence of ATP, only oligopeptides shorter than five residues are hydrolyzed (such as succinyl-Leu-Tyr-|-NHMec, and Leu-Tyr-Leu-|-Tyr-Trp, in which cleavage of the -Tyr-|-Leu- and -Tyr-|-Trp bonds also occurs).. Functionally, cleaves peptides in various proteins in a process that requires ATP hydrolysis. Has a chymotrypsin-like activity. Plays a major role in the degradation of misfolded proteins. The protein is ATP-dependent Clp protease proteolytic subunit of Alkaliphilus metalliredigens (strain QYMF).